Consider the following 263-residue polypeptide: Large ribosomal subunit protein uL29m (263 aa).

Disordered regions lie at residues 51 to 92 (ARVT…EELP) and 208 to 263 (PEID…APRV). A compositionally biased stretch (basic and acidic residues) spans 53–66 (VTRDNSKQRGESAL). Positions 214–223 (NPENPYTPST) are enriched in polar residues. Low complexity predominate over residues 233–245 (GAEASETQSTTTE). Positions 246 to 257 (IDPTTIPSSKSQ) are enriched in polar residues.

This sequence belongs to the universal ribosomal protein uL29 family. Component of the mitochondrial large ribosomal subunit (mt-LSU). Mature N.crassa 74S mitochondrial ribosomes consist of a small (37S) and a large (54S) subunit. The 37S small subunit contains a 16S ribosomal RNA (16S mt-rRNA) and 32 different proteins. The 54S large subunit contains a 23S rRNA (23S mt-rRNA) and 42 different proteins.

The protein resides in the mitochondrion. Component of the mitochondrial ribosome (mitoribosome), a dedicated translation machinery responsible for the synthesis of mitochondrial genome-encoded proteins, including at least some of the essential transmembrane subunits of the mitochondrial respiratory chain. The mitoribosomes are attached to the mitochondrial inner membrane and translation products are cotranslationally integrated into the membrane. In Neurospora crassa (strain ATCC 24698 / 74-OR23-1A / CBS 708.71 / DSM 1257 / FGSC 987), this protein is Large ribosomal subunit protein uL29m (mrpl4).